Consider the following 64-residue polypeptide: Alpha-conotoxin-like Ac1.1b (64 aa).

The N-terminal stretch at 1–21 (MGMRMMFTLFLLVVLTTTVVS) is a signal peptide. The propeptide occupies 22–47 (FPSDSASDGRDDEAKDERSDMYKSKR). The tract at residues 23–46 (PSDSASDGRDDEAKDERSDMYKSK) is disordered. Basic and acidic residues predominate over residues 28-44 (SDGRDDEAKDERSDMYK). 2 disulfide bridges follow: C51–C56 and C52–C62. C62 is modified (cysteine amide).

Belongs to the conotoxin A superfamily. In terms of tissue distribution, expressed by the venom duct.

It localises to the secreted. In terms of biological role, alpha-conotoxins act on postsynaptic membranes, they bind to the nicotinic acetylcholine receptors (nAChR) and thus inhibit them. In Conus achatinus (Little frog cone), this protein is Alpha-conotoxin-like Ac1.1b.